A 126-amino-acid chain; its full sequence is MQPYLLLAVGTGGFVGAILRFLISGWVQRLSPTLFPVGTLSVNVLGSFIIGFLALYFESVVAPHQKALVITGMLGALTTFSTFSLETVTMLQGGLWGRVVTNITLNVFLCVVATMLGMMLFKRLYG.

Helical transmembrane passes span 3 to 23 (PYLL…RFLI), 37 to 57 (VGTL…ALYF), 68 to 88 (LVIT…LETV), and 101 to 121 (TNIT…MMLF). Gly-75 and Thr-78 together coordinate Na(+).

Belongs to the fluoride channel Fluc/FEX (TC 1.A.43) family.

The protein localises to the cell inner membrane. The catalysed reaction is fluoride(in) = fluoride(out). Na(+) is not transported, but it plays an essential structural role and its presence is essential for fluoride channel function. In terms of biological role, fluoride-specific ion channel. Important for reducing fluoride concentration in the cell, thus reducing its toxicity. The sequence is that of Fluoride-specific ion channel FluC from Sulfurovum sp. (strain NBC37-1).